Consider the following 71-residue polypeptide: MKEGIHPEYKETTITCVCGNVITTRSTKQDIKVEICSQCHPFITGKQKIIDTAGRVERFNQKYAGVNNKKA.

Residues cysteine 16, cysteine 18, cysteine 36, and cysteine 39 each coordinate Zn(2+).

This sequence belongs to the bacterial ribosomal protein bL31 family. Type A subfamily. In terms of assembly, part of the 50S ribosomal subunit. Zn(2+) is required as a cofactor.

Binds the 23S rRNA. This chain is Large ribosomal subunit protein bL31, found in Syntrophus aciditrophicus (strain SB).